The primary structure comprises 430 residues: uncharacterized protein (430 aa).

12 consecutive transmembrane segments (helical) span residues 36 to 56 (LFVVSISQIFGGAGLAAGVTV), 69 to 89 (AFAGLPSALFTLGSAGSALIV), 100 to 122 (TGLSAGFMIGGLGAIGVIMAAII), 126 to 148 (FLLFISLLIYGAGTATNLQARYA), 160 to 180 (TAVSITMVFTTFGAVAGPSLV), 197 to 217 (GPFILAAAAYMLAGVVLFIML), 253 to 273 (IIVGATVMVLTQIVMVAIMTM), 285 to 305 (LGAVGLVIGFHIGAMYLPSLV), 317 to 337 (AMAISSGTTLLLAGVIAAFAP), 340 to 360 (SMILLVIALSLLGLGWNFGLI), 384 to 404 (VLIALSGAAGGALSGMIVAGS), and 406 to 426 (YLALSLIGGILSLLLIPVVVW).

The protein belongs to the major facilitator superfamily.

It localises to the cell membrane. This is an uncharacterized protein from Bacillus subtilis (strain 168).